Consider the following 264-residue polypeptide: Thymidylate synthase (264 aa).

Arg21 provides a ligand contact to dUMP. His51 is a binding site for (6R)-5,10-methylene-5,6,7,8-tetrahydrofolate. 126–127 (RR) is a dUMP binding site. Cys146 acts as the Nucleophile in catalysis. DUMP contacts are provided by residues 166–169 (RSAD), Asn177, and 207–209 (HLY). Asp169 contributes to the (6R)-5,10-methylene-5,6,7,8-tetrahydrofolate binding site. Ala263 contacts (6R)-5,10-methylene-5,6,7,8-tetrahydrofolate.

The protein belongs to the thymidylate synthase family. Bacterial-type ThyA subfamily. Homodimer.

The protein resides in the cytoplasm. It catalyses the reaction dUMP + (6R)-5,10-methylene-5,6,7,8-tetrahydrofolate = 7,8-dihydrofolate + dTMP. It functions in the pathway pyrimidine metabolism; dTTP biosynthesis. Its function is as follows. Catalyzes the reductive methylation of 2'-deoxyuridine-5'-monophosphate (dUMP) to 2'-deoxythymidine-5'-monophosphate (dTMP) while utilizing 5,10-methylenetetrahydrofolate (mTHF) as the methyl donor and reductant in the reaction, yielding dihydrofolate (DHF) as a by-product. This enzymatic reaction provides an intracellular de novo source of dTMP, an essential precursor for DNA biosynthesis. This Legionella pneumophila (strain Paris) protein is Thymidylate synthase.